A 308-amino-acid polypeptide reads, in one-letter code: Atrochrysone carboxyl ACP thioesterase (308 aa).

Zn(2+)-binding residues include H99, H101, D103, and H104. D103 (proton donor/acceptor) is an active-site residue.

The protein belongs to the metallo-beta-lactamase superfamily. Requires Zn(2+) as cofactor.

It carries out the reaction atrochrysone carboxyl-[ACP] + H2O = atrochrysone carboxylate + holo-[ACP] + H(+). It functions in the pathway secondary metabolite biosynthesis. Its function is as follows. Atrochrysone carboxyl ACP thioesterase; part of the gene cluster that mediates the biosynthesis of physcion, a natural anthraquinone fungicide that can prevent plant fungal infections. The pathway begins with the polyketide synthase AcPKS that condenses 8 malonyl-CoA units to synthesize atrochrysone thioester which is released from the synthase by the atrochrysone carboxyl ACP thioesterase AcTE that breaks the thioester bond and leads to free atrochrysone carboxylic acid. Spontaneous decarboxylation of atrochrysone carboxylic acid leads to the formation of atrochrysone. Then, atrochrysone undergoes spontaneous dehydration and oxidation, giving the products emodin anthrone and emodin. The O-methyltransferase AcOMT then methylates the C-6 hydroxyl of emodin to form physcion. In Aspergillus chevalieri (Eurotium chevalieri), this protein is Atrochrysone carboxyl ACP thioesterase.